The primary structure comprises 188 residues: Multiple organellar RNA editing factor 7, mitochondrial (188 aa).

Residues 1-20 (MARIIRRPLNLTAAVRFRLS) constitute a mitochondrion transit peptide. Positions 169–188 (DAKSGVVKKKHRRKRKKKLI) are disordered. Residues 174–188 (VVKKKHRRKRKKKLI) show a composition bias toward basic residues.

It belongs to the MORF family. As to quaternary structure, heterodimers with MORF8/RIP1, MORF5/RIP5 and MORF6/RIP6.

It localises to the mitochondrion. Functionally, involved in organellar RNA editing. Required for the processing of few RNA editing sites in mitochondria. The sequence is that of Multiple organellar RNA editing factor 7, mitochondrial from Arabidopsis thaliana (Mouse-ear cress).